The sequence spans 361 residues: 3-dehydroquinate synthase (361 aa).

NAD(+)-binding positions include 71–76 (DGEQFK), 105–109 (GVIGD), 129–130 (TT), Lys142, Lys151, and 169–172 (CLQT). 3 residues coordinate Zn(2+): Glu184, His247, and His264.

Belongs to the sugar phosphate cyclases superfamily. Dehydroquinate synthase family. The cofactor is Co(2+). It depends on Zn(2+) as a cofactor. Requires NAD(+) as cofactor.

It is found in the cytoplasm. It carries out the reaction 7-phospho-2-dehydro-3-deoxy-D-arabino-heptonate = 3-dehydroquinate + phosphate. The protein operates within metabolic intermediate biosynthesis; chorismate biosynthesis; chorismate from D-erythrose 4-phosphate and phosphoenolpyruvate: step 2/7. Catalyzes the conversion of 3-deoxy-D-arabino-heptulosonate 7-phosphate (DAHP) to dehydroquinate (DHQ). This Edwardsiella ictaluri (strain 93-146) protein is 3-dehydroquinate synthase.